A 137-amino-acid chain; its full sequence is Holo-[acyl-carrier-protein] synthase (137 aa).

Residues aspartate 8 and glutamate 57 each coordinate Mg(2+).

This sequence belongs to the P-Pant transferase superfamily. AcpS family. Mg(2+) serves as cofactor.

Its subcellular location is the cytoplasm. It catalyses the reaction apo-[ACP] + CoA = holo-[ACP] + adenosine 3',5'-bisphosphate + H(+). Transfers the 4'-phosphopantetheine moiety from coenzyme A to a Ser of acyl-carrier-protein. In Cereibacter sphaeroides (strain ATCC 17023 / DSM 158 / JCM 6121 / CCUG 31486 / LMG 2827 / NBRC 12203 / NCIMB 8253 / ATH 2.4.1.) (Rhodobacter sphaeroides), this protein is Holo-[acyl-carrier-protein] synthase.